The sequence spans 132 residues: MMESVAQEIILSCEINSIERGSLKNLSMVNMSCNGFNVSFDIIDSINIFSQKEKVKVIISKNRPSYSHDDFCGHGYIVTELKDSSLNNGNKYTTIISLYGLLVKIISNKESFLRTSQLNIMDHVYFCVKKNN.

This sequence belongs to the archaeal Rpo8 RNA polymerase subunit family. In terms of assembly, part of the 13-subunit RNA polymerase complex.

It localises to the cytoplasm. The catalysed reaction is RNA(n) + a ribonucleoside 5'-triphosphate = RNA(n+1) + diphosphate. In terms of biological role, DNA-dependent RNA polymerase (RNAP) catalyzes the transcription of DNA into RNA using the four ribonucleoside triphosphates as substrates. This Saccharolobus solfataricus (strain ATCC 35092 / DSM 1617 / JCM 11322 / P2) (Sulfolobus solfataricus) protein is DNA-directed RNA polymerase subunit Rpo8.